The following is a 156-amino-acid chain: MPTPKKGARLGGSASHQKKILSNLAAQLFENGAIKTTDAKAKLLRPYAEKIITKAKNGTLADRRNVLKLIPNKDVVSHLFTELAPKFEGREGGYTRIIKLENRKGDNAPMSQISLVTEELASKEAERATRAAASKKAAEEKAAEAAEEKDEAAEEK.

The interval 127-156 (RATRAAASKKAAEEKAAEAAEEKDEAAEEK) is disordered. Over residues 136-146 (KAAEEKAAEAA) the composition is skewed to basic and acidic residues. Positions 147 to 156 (EEKDEAAEEK) are enriched in acidic residues.

It belongs to the bacterial ribosomal protein bL17 family. Part of the 50S ribosomal subunit. Contacts protein L32.

This chain is Large ribosomal subunit protein bL17, found in Corynebacterium urealyticum (strain ATCC 43042 / DSM 7109).